Consider the following 331-residue polypeptide: Tryptophan--tRNA ligase (331 aa).

ATP contacts are provided by residues 10–12 (QPS) and 18–19 (GN). The 'HIGH' region signature appears at 11–19 (PSGQLTLGN). Asp133 is an L-tryptophan binding site. ATP-binding positions include 145–147 (GED), Val184, and 193–197 (KMSKS). Positions 193-197 (KMSKS) match the 'KMSKS' region motif.

It belongs to the class-I aminoacyl-tRNA synthetase family. Homodimer.

It localises to the cytoplasm. It catalyses the reaction tRNA(Trp) + L-tryptophan + ATP = L-tryptophyl-tRNA(Trp) + AMP + diphosphate + H(+). Catalyzes the attachment of tryptophan to tRNA(Trp). The polypeptide is Tryptophan--tRNA ligase (Listeria innocua serovar 6a (strain ATCC BAA-680 / CLIP 11262)).